A 476-amino-acid polypeptide reads, in one-letter code: Bifunctional protein HldE (476 aa).

Residues 1–319 (MAQYSAQFPH…NAIHGRTVSG (319 aa)) form a ribokinase region. Residue 195–198 (NMSE) participates in ATP binding. The active site involves D264. Residues 344–476 (MTNGCFDILH…VIKKIRDLKD (133 aa)) form a cytidylyltransferase region.

The protein in the N-terminal section; belongs to the carbohydrate kinase PfkB family. This sequence in the C-terminal section; belongs to the cytidylyltransferase family. Homodimer.

The catalysed reaction is D-glycero-beta-D-manno-heptose 7-phosphate + ATP = D-glycero-beta-D-manno-heptose 1,7-bisphosphate + ADP + H(+). It carries out the reaction D-glycero-beta-D-manno-heptose 1-phosphate + ATP + H(+) = ADP-D-glycero-beta-D-manno-heptose + diphosphate. The protein operates within nucleotide-sugar biosynthesis; ADP-L-glycero-beta-D-manno-heptose biosynthesis; ADP-L-glycero-beta-D-manno-heptose from D-glycero-beta-D-manno-heptose 7-phosphate: step 1/4. Its pathway is nucleotide-sugar biosynthesis; ADP-L-glycero-beta-D-manno-heptose biosynthesis; ADP-L-glycero-beta-D-manno-heptose from D-glycero-beta-D-manno-heptose 7-phosphate: step 3/4. Catalyzes the phosphorylation of D-glycero-D-manno-heptose 7-phosphate at the C-1 position to selectively form D-glycero-beta-D-manno-heptose-1,7-bisphosphate. Its function is as follows. Catalyzes the ADP transfer from ATP to D-glycero-beta-D-manno-heptose 1-phosphate, yielding ADP-D-glycero-beta-D-manno-heptose. The protein is Bifunctional protein HldE of Actinobacillus succinogenes (strain ATCC 55618 / DSM 22257 / CCUG 43843 / 130Z).